The chain runs to 44 residues: Conotoxin Cl9a (44 aa).

4-carboxyglutamate is present on residues glutamate 7, glutamate 8, and glutamate 24. 3 disulfides stabilise this stretch: cysteine 9-cysteine 33, cysteine 15-cysteine 40, and cysteine 23-cysteine 42.

In terms of tissue distribution, expressed by the venom duct.

Its subcellular location is the secreted. In Californiconus californicus (California cone), this protein is Conotoxin Cl9a.